Consider the following 283-residue polypeptide: Putative sugar uptake protein BA_0200/GBAA_0200/BAS0200 (283 aa).

10 consecutive transmembrane segments (helical) span residues 4-21 (LLALLPAIAWGNILLVSV), 26-48 (GAYSQTVGMTIGALFFATIMYVF), 52-71 (ALTMTILIVGFISGLFWALG), 84-106 (VSTTVTISTGMQLVATSIFGVIA), 110-132 (WTTTTTIILGTIAILLIVVGVVF), 151-173 (LLTLIVSTFGYLVYVIIIRWYNI), 178-195 (AILPQAVGMFVGAVVLTS), 208-230 (ALSGLLWGTGNLFLLLSLPRVGV), 234-253 (FPLSQTGIVISTFGAIVFLG), and 260-279 (QLIFIALGSVLIIGGAVLLG).

It belongs to the GRP transporter (TC 2.A.7.5) family.

The protein localises to the cell membrane. The chain is Putative sugar uptake protein BA_0200/GBAA_0200/BAS0200 from Bacillus anthracis.